Here is a 217-residue protein sequence, read N- to C-terminus: Large ribosomal subunit protein bL21m (217 aa).

Positions 61–81 (PPKVTTATTPEAPAAVPTSTP) are enriched in low complexity. Residues 61–87 (PPKVTTATTPEAPAAVPTSTPFSQQPP) are disordered.

The protein belongs to the bacterial ribosomal protein bL21 family. Component of the mitochondrial large ribosomal subunit (mt-LSU). Mature N.crassa 74S mitochondrial ribosomes consist of a small (37S) and a large (54S) subunit. The 37S small subunit contains a 16S ribosomal RNA (16S mt-rRNA) and 32 different proteins. The 54S large subunit contains a 23S rRNA (23S mt-rRNA) and 42 different proteins.

The protein resides in the mitochondrion. Component of the mitochondrial ribosome (mitoribosome), a dedicated translation machinery responsible for the synthesis of mitochondrial genome-encoded proteins, including at least some of the essential transmembrane subunits of the mitochondrial respiratory chain. The mitoribosomes are attached to the mitochondrial inner membrane and translation products are cotranslationally integrated into the membrane. This chain is Large ribosomal subunit protein bL21m (mrpl49), found in Neurospora crassa (strain ATCC 24698 / 74-OR23-1A / CBS 708.71 / DSM 1257 / FGSC 987).